Here is a 283-residue protein sequence, read N- to C-terminus: Galactooligosaccharides transport system permease protein GanQ (283 aa).

6 helical membrane passes run 13-33 (LLFS…PLLW), 82-102 (ISLF…YAFS), 115-135 (LFLL…FVLA), 137-157 (ILGM…GLIP), 188-208 (IFFQ…AMNG), and 248-268 (TTFA…FIML). Residues 76 to 268 (YVNSMKISLF…IPVAVIFIML (193 aa)) enclose the ABC transmembrane type-1 domain.

This sequence belongs to the binding-protein-dependent transport system permease family. The complex is composed of two ATP-binding proteins (MsmX), two transmembrane proteins (GanP and GanQ) and a solute-binding protein (GanS).

Its subcellular location is the cell membrane. In terms of biological role, involved in galactan degradation. Part of the ABC transporter complex GanPQS involved in the uptake of galactooligosaccharides. Responsible for the translocation of the substrate across the membrane. The protein is Galactooligosaccharides transport system permease protein GanQ (ganQ) of Bacillus subtilis (strain 168).